Here is a 123-residue protein sequence, read N- to C-terminus: Small ribosomal subunit protein uS12c (123 aa).

It belongs to the universal ribosomal protein uS12 family. In terms of assembly, part of the 30S ribosomal subunit.

It is found in the plastid. The protein localises to the chloroplast. In terms of biological role, with S4 and S5 plays an important role in translational accuracy. Located at the interface of the 30S and 50S subunits. The chain is Small ribosomal subunit protein uS12c (rps12) from Physcomitrium patens (Spreading-leaved earth moss).